The chain runs to 859 residues: Magnesium transporter ALR1 (859 aa).

Positions Met1–Leu20 are enriched in low complexity. 2 disordered regions span residues Met1–Gln281 and Thr330–Ser399. Residue Ser2 is modified to N-acetylserine. Basic and acidic residues-rich tracts occupy residues Lys28–Pro42 and Lys55–Ser73. Tyr77 is modified (phosphotyrosine). Residue Ser85 is modified to Phosphoserine. Over residues Pro144–Tyr154 the composition is skewed to basic and acidic residues. Positions Ser157–Ser176 are enriched in low complexity. Phosphoserine is present on residues Ser185 and Ser188. Over residues Ile193–Ser203 the composition is skewed to basic and acidic residues. The span at Tyr213–Lys235 shows a compositional bias: polar residues. Phosphoserine occurs at positions 220, 221, and 236. The residue at position 242 (Thr242) is a Phosphothreonine. Residues Thr252–Arg265 show a composition bias toward polar residues. Low complexity predominate over residues Thr330 to Ser339. The segment covering Glu353 to Lys375 has biased composition (basic and acidic residues). 2 helical membrane passes run Thr744 to Val764 and Ile773 to Leu793. Positions Phe830 to Asp859 are disordered. Position 850 is a phosphoserine (Ser850).

This sequence belongs to the CorA metal ion transporter (MIT) (TC 1.A.35) family.

Its subcellular location is the cell membrane. Functionally, plasma membrane magnesium transporter. In Saccharomyces cerevisiae (strain ATCC 204508 / S288c) (Baker's yeast), this protein is Magnesium transporter ALR1 (ALR1).